The chain runs to 567 residues: Inactive protein kinase SELMODRAFT_444075 (567 aa).

The interval 148-206 (NETRRKGPSPSEVLNSTTSSPASHKPQVLNDFLRMKESREYTEETDTQRNVSRPVDRVS) is disordered. The span at 159–169 (EVLNSTTSSPA) shows a compositional bias: polar residues. Residues 180-189 (LRMKESREYT) show a composition bias toward basic and acidic residues. Residues 196–206 (RNVSRPVDRVS) show a composition bias toward low complexity. Positions 255-487 (FSDVNFLAEG…EGDSLSDTSL (233 aa)) constitute a Protein kinase domain. ATP is bound by residues 261 to 269 (LAEGGYGSV) and lysine 283. The span at 511–538 (DSSSSRSSSASSVLKSFSRTQHSSRSSS) shows a compositional bias: low complexity. A disordered region spans residues 511 to 567 (DSSSSRSSSASSVLKSFSRTQHSSRSSSNAGSPLNPAATQALAFKKYNKNTTRHTQD). The segment covering 556–567 (KYNKNTTRHTQD) has biased composition (basic residues).

This is Inactive protein kinase SELMODRAFT_444075 from Selaginella moellendorffii (Spikemoss).